Consider the following 430-residue polypeptide: Gamma-glutamyl phosphate reductase (430 aa).

Belongs to the gamma-glutamyl phosphate reductase family.

The protein localises to the cytoplasm. The enzyme catalyses L-glutamate 5-semialdehyde + phosphate + NADP(+) = L-glutamyl 5-phosphate + NADPH + H(+). It functions in the pathway amino-acid biosynthesis; L-proline biosynthesis; L-glutamate 5-semialdehyde from L-glutamate: step 2/2. Functionally, catalyzes the NADPH-dependent reduction of L-glutamate 5-phosphate into L-glutamate 5-semialdehyde and phosphate. The product spontaneously undergoes cyclization to form 1-pyrroline-5-carboxylate. The protein is Gamma-glutamyl phosphate reductase of Psychrobacter arcticus (strain DSM 17307 / VKM B-2377 / 273-4).